The chain runs to 462 residues: Ketoisovalerate reductase (462 aa).

The interval 34–55 (PTAVKPDRADRGDFDPGKYPVD) is disordered. Over residues 38–49 (KPDRADRGDFDP) the composition is skewed to basic and acidic residues. 72 to 77 (GPGNVG) contributes to the NADP(+) binding site. Positions 167–184 (ADRLRRYLGRCSSVVFAQ) match the Calmoduling-binding motif. The active-site Proton donor is the K290. Positions 294, 298, and 403 each coordinate substrate. E415 provides a ligand contact to NADP(+).

Belongs to the ketopantoate reductase family. Homodimer. Binds to calmodulin in a calcium-independent manner.

The enzyme catalyses (R)-2-hydroxy-3-methylbutanoate + NADP(+) = 3-methyl-2-oxobutanoate + NADPH + H(+). Its activity is regulated as follows. Environmental stimuli such as light and salt stress suppress activity through stimulation of calmodulin (CaM) that binds BEA2 and probably impairs its dimerization. In terms of biological role, ketoisovalerate reductase; part of the gene cluster that mediates the biosynthesis of beauvericin (BEA), a non-ribosomal cyclic hexadepsipeptide that shows antibiotic, antifungal, insecticidal, and cancer cell antiproliferative and antihaptotactic activity. Ketoisovalerate reductase BEA2 catalyzes the NADPH-specific reduction of ketoisovaleric acid to hydroxyisovalerate, a precursor for beauvericin biosynthesis. The nonribosomal cyclodepsipeptide synthetase BEA1 then catalyzes the formation of beauvericin via condensation and cyclization of 3 dipeptidol monomers, each composed of one unit of hydroxyisovalerate and one unit of N-methyl-phenylalanine. The protein is Ketoisovalerate reductase of Beauveria bassiana (White muscardine disease fungus).